A 244-amino-acid polypeptide reads, in one-letter code: tRNA (guanine-N(7)-)-methyltransferase (244 aa).

A disordered region spans residues 1 to 20; that stretch reads MTNPFDSAGSKAPPKPFTVS. Positions 75, 100, 127, and 150 each coordinate S-adenosyl-L-methionine. The active site involves Asp-150. Lys-154 lines the substrate pocket. The segment at 156-161 is interaction with RNA; the sequence is RHNKRR. Residues Asp-186 and 223-226 contribute to the substrate site; that span reads THFE.

It belongs to the class I-like SAM-binding methyltransferase superfamily. TrmB family.

It carries out the reaction guanosine(46) in tRNA + S-adenosyl-L-methionine = N(7)-methylguanosine(46) in tRNA + S-adenosyl-L-homocysteine. The protein operates within tRNA modification; N(7)-methylguanine-tRNA biosynthesis. In terms of biological role, catalyzes the formation of N(7)-methylguanine at position 46 (m7G46) in tRNA. The sequence is that of tRNA (guanine-N(7)-)-methyltransferase from Stenotrophomonas maltophilia (strain K279a).